Consider the following 215-residue polypeptide: C-type lectin domain family 4 member D (215 aa).

At 1–17 (MGLEKPQSKLEGGMHPQ) the chain is on the cytoplasmic side. A helical; Signal-anchor for type II membrane protein membrane pass occupies residues 18–38 (LIPSVIAVVFILLLSVCFIAS). The Extracellular portion of the chain corresponds to 39–215 (CLVTHHNFSR…ICKIPGTTLN (177 aa)). Asn45 carries an N-linked (GlcNAc...) asparagine glycan. A disulfide bridge connects residues Cys84 and Cys95. Residues 91 to 208 (FQSNCYFPLT…CNFEASRICK (118 aa)) form the C-type lectin domain. N-linked (GlcNAc...) asparagine glycosylation is found at Asn102 and Asn111. 2 disulfide bridges follow: Cys112-Cys207 and Cys182-Cys199. Ca(2+) is bound by residues Glu173, Asp175, Asn195, and Asp196.

Heterodimer with CLEC4E; disulfide-linked. CLEC4E acts as a bridge for interaction between CLEC4D and FCER1G to form a functional complex. Heterodimer with CLEC6A; this heterodimer forms a pattern recognition receptor (PRR) against fungal infection. Expressed weakly in peripheral blood leukocytes, bone marrow and spleen. Expression is confined mostly in monocytes and macrophage and seems to be up-regulated by IL-6, IL-10, TNF-alpha and IFN-gamma.

Its subcellular location is the cell membrane. Its function is as follows. Calcium-dependent lectin that acts as a pattern recognition receptor (PRR) of the innate immune system: recognizes damage-associated molecular patterns (DAMPs) of pathogen-associated molecular patterns (PAMPs) of bacteria and fungi. The PAMPs include alpha-mannans on C.albicans hypheas and mycobacterial trehalose 6,6'-dimycolate (TDM). Interacts with signaling adapter Fc receptor gamma chain/FCER1G, likely via CLEC4E, to form a functional complex in myeloid cells. Binding of mycobacterial TDM or C.albicans alpha-mannans to this receptor complex leads to phosphorylation of the immunoreceptor tyrosine-based activation motif (ITAM) of FCER1G, triggering activation of SYK, CARD9 and NF-kappa-B, consequently driving maturation of antigen-presenting cells and shaping antigen-specific priming of T-cells toward effector T-helper 1 and T-helper 17 cell subtypes. The heterodimer formed with CLEC6A is active against fungal infection. Functions as an endocytic receptor. May be involved in antigen uptake at the site of infection, either for clearance of the antigen, or for processing and further presentation to T-cells. The sequence is that of C-type lectin domain family 4 member D from Homo sapiens (Human).